The primary structure comprises 1311 residues: Nephrocystin-3 (1311 aa).

Positions 81–183 (SKNNEIASMQ…LQRLQAQGIQ (103 aa)) form a coiled coil. TPR repeat units follow at residues 889–923 (LSYW…EEKM), 927–960 (ADLY…RETA), 969–1002 (AQSL…SENA), 1011–1044 (AREL…RQKS), 1077–1110 (ARTL…RERV), 1119–1152 (AQSI…RRRA), 1161–1194 (AYTV…RQKS), 1203–1236 (ATAL…YEDS), and 1245–1278 (GETL…KETE).

The protein resides in the cell projection. It is found in the cilium. Functionally, required for normal ciliary development and function. Inhibits disheveled-1-induced canonical Wnt-signaling activity and may also play a role in the control of non-canonical Wnt signaling that regulates planar cell polarity. Probably acts as a molecular switch between different Wnt signaling pathways. Required for proper convergent extension cell movements. The sequence is that of Nephrocystin-3 (nphp3) from Xenopus tropicalis (Western clawed frog).